A 1708-amino-acid polypeptide reads, in one-letter code: 187-kDa microtubule-associated protein AIR9 (1708 aa).

Residues 67-93 (SSLRVSGTTPVTIRRNSTGGVTENLAG) are compositionally biased toward polar residues. Residues 67-255 (SSLRVSGTTP…KTSTPESRDS (189 aa)) are disordered. Over residues 110–121 (DPVRRSLPELRK) the composition is skewed to basic and acidic residues. The span at 122–134 (SSVSSLSAKTVSK) shows a compositional bias: low complexity. Positions 149–165 (GSRSLTKSTGFSLSKPE) are enriched in polar residues. The segment covering 173–234 (SVSVSSKRAP…SIRSKSFSSP (62 aa)) has biased composition (low complexity). LRR repeat units follow at residues 267–290 (AGDDMRLDLRGHRIRSLTSGGLHL), 291–315 (SPNLEFVYLRDNLLSTLEGIEILNR), 316–335 (VKVLDLSFNDFKGPGFEPLE), 337–359 (CKMLQQLYLAGNQITSLASLPQL), 360–382 (PNLEFLSVAQNKLKSLAMASQPR), 384–402 (QVLAASKNKITTLKDFPYL), and 403–425 (PVLEHLRVEENPLLKISHLEAAS). 11 A9 repeats span residues 489 to 584 (PSGY…FAIS), 601 to 682 (LNGE…QYKY), 698 to 777 (ITGD…VSTS), 793 to 878 (IVGD…VYVL), 895 to 977 (ITGD…RSCM), 994 to 1073 (VVGA…AISE), 1090 to 1167 (FLGS…RSIR), 1183 to 1272 (IPDC…VVVI), 1287 to 1365 (VRVK…KMSE), 1382 to 1473 (FTGK…AYAE), and 1489 to 1569 (IEGQ…VSAS).

As to quaternary structure, interacts with KCBP. Strongly expressed in dividing cells, like the meristemic region of the root tip.

The protein localises to the cytoplasm. Its subcellular location is the cell cortex. The protein resides in the cytoskeleton. It is found in the phragmoplast. Its function is as follows. Microtubule-associated protein that may be involved in the maturation of cell plates and proper insertion of cross-walls after cytokinesis. The sequence is that of 187-kDa microtubule-associated protein AIR9 from Arabidopsis thaliana (Mouse-ear cress).